The sequence spans 159 residues: SsrA-binding protein (159 aa).

A disordered region spans residues 138-159 (KRDTLKDKDWQRQKERMMKHSV).

Belongs to the SmpB family.

Its subcellular location is the cytoplasm. Its function is as follows. Required for rescue of stalled ribosomes mediated by trans-translation. Binds to transfer-messenger RNA (tmRNA), required for stable association of tmRNA with ribosomes. tmRNA and SmpB together mimic tRNA shape, replacing the anticodon stem-loop with SmpB. tmRNA is encoded by the ssrA gene; the 2 termini fold to resemble tRNA(Ala) and it encodes a 'tag peptide', a short internal open reading frame. During trans-translation Ala-aminoacylated tmRNA acts like a tRNA, entering the A-site of stalled ribosomes, displacing the stalled mRNA. The ribosome then switches to translate the ORF on the tmRNA; the nascent peptide is terminated with the 'tag peptide' encoded by the tmRNA and targeted for degradation. The ribosome is freed to recommence translation, which seems to be the essential function of trans-translation. This Alteromonas mediterranea (strain DSM 17117 / CIP 110805 / LMG 28347 / Deep ecotype) protein is SsrA-binding protein.